Reading from the N-terminus, the 115-residue chain is Protein VCF2 (115 aa).

Residues 1–12 (MGGCPVRKRRRN) show a composition bias toward basic residues. The tract at residues 1–70 (MGGCPVRKRR…GPEGNLNQIV (70 aa)) is disordered. Positions 33 to 44 (FQDSQDTEFSWS) are enriched in polar residues.

Belongs to the VCF family.

This is Protein VCF2 from Homo sapiens (Human).